The following is a 432-amino-acid chain: Serine/threonine-protein kinase stk11 (432 aa).

One can recognise a Protein kinase domain in the interval tyrosine 52 to phenylalanine 312. ATP contacts are provided by residues leucine 58 to valine 66 and lysine 81. The Proton acceptor role is filled by aspartate 179. Threonine 192 bears the Phosphothreonine; by autocatalysis mark. Positions threonine 398–glutamine 432 are disordered. A compositionally biased stretch (polar residues) spans serine 409–serine 421. Basic residues predominate over residues lysine 422–glutamine 432. A Phosphoserine; by PKA modification is found at serine 427.

The protein belongs to the protein kinase superfamily. CAMK Ser/Thr protein kinase family. LKB1 subfamily. In terms of assembly, catalytic component of a trimeric complex composed of STK11/LKB1, STRAD (STRADA or STRADB) and CAB39/MO25 (CAB39/MO25alpha or CAB39L/MO25beta). Mg(2+) serves as cofactor. Mn(2+) is required as a cofactor. Post-translationally, phosphorylated by a cAMP-dependent protein kinase. Autophosphorylated in a reaction that prefers Mn(2+) to Mg(2+). As to expression, oocytes, eggs and early embryos.

The protein resides in the nucleus. It localises to the cytoplasm. The enzyme catalyses L-seryl-[protein] + ATP = O-phospho-L-seryl-[protein] + ADP + H(+). It carries out the reaction L-threonyl-[protein] + ATP = O-phospho-L-threonyl-[protein] + ADP + H(+). In terms of biological role, tumor suppressor serine/threonine-protein kinase that controls the activity of AMP-activated protein kinase (AMPK) family members, thereby playing a role in various processes such as cell metabolism, cell polarity, apoptosis and DNA damage response. Acts by phosphorylating the T-loop of AMPK family proteins, leading to promote their activity. In Xenopus laevis (African clawed frog), this protein is Serine/threonine-protein kinase stk11.